The sequence spans 430 residues: Purine nucleoside phosphorylase LACC1 (430 aa).

K247 carries the post-translational modification N6-acetyllysine. Zn(2+) contacts are provided by H250, C284, and H301.

This sequence belongs to the purine nucleoside phosphorylase YfiH/LACC1 family. In terms of assembly, interacts with FASN. Interacts with SDHA. Interacts with ATF6, EIF2AK3 and ERN1. Post-translationally, phosphorylated on tyrosine residues. As to expression, ubiquitously expressed, with higher expression levels in immune-related tissues such as lymph nodes and spleen. Expressed in both intestinal and peripheral myeloid-derived cells.

It is found in the cytoplasm. The protein localises to the nucleus. Its subcellular location is the endoplasmic reticulum. It localises to the peroxisome. It carries out the reaction adenosine + phosphate = alpha-D-ribose 1-phosphate + adenine. The catalysed reaction is inosine + phosphate = alpha-D-ribose 1-phosphate + hypoxanthine. The enzyme catalyses guanosine + phosphate = alpha-D-ribose 1-phosphate + guanine. It catalyses the reaction S-methyl-5'-thioadenosine + phosphate = 5-(methylsulfanyl)-alpha-D-ribose 1-phosphate + adenine. It carries out the reaction adenosine + H2O + H(+) = inosine + NH4(+). Functionally, purine nucleoside enzyme that catalyzes the phosphorolysis of adenosine, guanosine and inosine nucleosides, yielding D-ribose 1-phosphate and the respective free bases, adenine, guanine and hypoxanthine. Also catalyzes the phosphorolysis of S-methyl-5'-thioadenosine into adenine and S-methyl-5-thio-alpha-D-ribose 1-phosphate. Also has adenosine deaminase activity. Acts as a regulator of innate immunity in macrophages by modulating the purine nucleotide metabolism, thereby regulating the metabolic function and bioenergetic state of macrophages. Enables a purine nucleotide cycle between adenosine and inosine monophosphate and adenylosuccinate that prevents cytoplasmic acidification and balances the cytoplasmic-mitochondrial redox interface. The purine nucleotide cycle consumes aspartate and releases fumarate in a manner involving fatty acid oxidation and ATP-citrate lyase activity. Participates in pattern recognition receptor (PRR)-induced cytokines in macrophages: associates with the NOD2-signaling complex and promotes optimal NOD2-induced signaling, cytokine secretion and bacterial clearance. Localizes to the endoplasmic reticulum upon PRR stimulation of macrophages and associates with endoplasmic reticulum-stress sensors, promoting the endoplasmic reticulum unfolded protein response (UPR). Does not show laccase activity. This chain is Purine nucleoside phosphorylase LACC1, found in Homo sapiens (Human).